A 410-amino-acid polypeptide reads, in one-letter code: Fiber protein 2 (410 aa).

Residues 1–10 show a composition bias toward basic and acidic residues; that stretch reads MADQKRKLAD. Residues 1–22 form a disordered region; that stretch reads MADQKRKLADPDAEAPTGKMAR.

This sequence belongs to the adenoviridae fiber family. In terms of assembly, homotrimer. Interacts (via N-terminal tail region) with pentons.

It is found in the virion. Its subcellular location is the host nucleus. Functionally, forms spikes that protrude from each vertex of the icosahedral capsid. Interacts with host receptor to provide virion initial attachment to target cell. Fiber proteins are shed during virus entry, when virus is still at the cell surface. This Fowl adenovirus A serotype 1 (strain CELO / Phelps) (FAdV-1) protein is Fiber protein 2.